A 354-amino-acid polypeptide reads, in one-letter code: Fructose-1,6-bisphosphatase class 1 (354 aa).

4 residues coordinate Mg(2+): glutamate 112, aspartate 134, leucine 136, and aspartate 137. Substrate-binding positions include 137 to 140 (DGSS), asparagine 229, tyrosine 257, and lysine 287. Residue glutamate 293 coordinates Mg(2+).

It belongs to the FBPase class 1 family. Homotetramer. Mg(2+) is required as a cofactor.

Its subcellular location is the cytoplasm. It carries out the reaction beta-D-fructose 1,6-bisphosphate + H2O = beta-D-fructose 6-phosphate + phosphate. Its pathway is carbohydrate biosynthesis; Calvin cycle. The sequence is that of Fructose-1,6-bisphosphatase class 1 from Trichodesmium erythraeum (strain IMS101).